We begin with the raw amino-acid sequence, 442 residues long: UDP-N-acetylmuramate--L-alanine ligase (442 aa).

109–115 (GAHGKTS) serves as a coordination point for ATP.

The protein belongs to the MurCDEF family.

The protein resides in the cytoplasm. The catalysed reaction is UDP-N-acetyl-alpha-D-muramate + L-alanine + ATP = UDP-N-acetyl-alpha-D-muramoyl-L-alanine + ADP + phosphate + H(+). It functions in the pathway cell wall biogenesis; peptidoglycan biosynthesis. Functionally, cell wall formation. This Streptococcus pyogenes serotype M18 (strain MGAS8232) protein is UDP-N-acetylmuramate--L-alanine ligase.